Consider the following 610-residue polypeptide: Propanediol dehydratase-reactivating factor large subunit (610 aa).

Residue 11–13 (NSS) participates in ATP binding. The Mg(2+) site is built by Thr105, Asp166, and Asp183. Residues 459–462 (EEIK), 557–558 (GS), and Arg591 contribute to the ATP site.

This sequence belongs to the DdrA/PduG family. In terms of assembly, forms a heterotetramer PduG(2)/PduH(2). Requires Mg(2+) as cofactor.

It localises to the bacterial microcompartment. It catalyses the reaction ATP + H2O = ADP + phosphate + H(+). The protein operates within polyol metabolism; 1,2-propanediol degradation. Large subunit of the propanediol dehydratase-reactivating factor (DDR), which reactivates suicidally inhibited adenosylcobalamin-dependent propanediol dehydratase (diol dehydratase, DDH) found in the bacterial microcompartment (BMC) dedicated to 1,2-propanediol (1,2-PD) degradation. Reactivates inactivated DDH in the presence of ATP, Mg(2+) and free adenosylcobalamin (AdoCbl), by mediating the exchange of the tightly bound damaged cofactor AdoCbl for a free intact one. This subunit contains the adenosine nucleotide binding site. In terms of biological role, the 1,2-PD-specific bacterial microcompartment (BMC) concentrates low levels of 1,2-PD catabolic enzymes, concentrates volatile reaction intermediates thus enhancing pathway flux and keeps the level of toxic, mutagenic propionaldehyde low. The protein is Propanediol dehydratase-reactivating factor large subunit of Salmonella typhimurium (strain LT2 / SGSC1412 / ATCC 700720).